A 236-amino-acid polypeptide reads, in one-letter code: MIVFPAVDILGGRCVQLVQGKRETATSYGDPLLCAESWINQGAEALHIVNLDGAFGSSKLNAEKITDVIIRTGVKTQLGGGIRSLDDARSWLDCGVDRIIISTFAADDPECLTILSEEYGSDRIMAGVDARAGEMVTHGWERPAGDFLEWADLFIRKGAGSLLYTNVSVEGLCNGIDPKPIRDLLSTVSVPVVVAGGITSPSDIKILKEADAAGVVLGSALYSGKITLQEALEAAG.

The Proton acceptor role is filled by Asp8. The Proton donor role is filled by Asp129.

It belongs to the HisA/HisF family.

It localises to the cytoplasm. The catalysed reaction is 1-(5-phospho-beta-D-ribosyl)-5-[(5-phospho-beta-D-ribosylamino)methylideneamino]imidazole-4-carboxamide = 5-[(5-phospho-1-deoxy-D-ribulos-1-ylimino)methylamino]-1-(5-phospho-beta-D-ribosyl)imidazole-4-carboxamide. It participates in amino-acid biosynthesis; L-histidine biosynthesis; L-histidine from 5-phospho-alpha-D-ribose 1-diphosphate: step 4/9. The polypeptide is 1-(5-phosphoribosyl)-5-[(5-phosphoribosylamino)methylideneamino] imidazole-4-carboxamide isomerase (Methanospirillum hungatei JF-1 (strain ATCC 27890 / DSM 864 / NBRC 100397 / JF-1)).